Reading from the N-terminus, the 105-residue chain is POU domain, class 3, transcription factor 3 (105 aa).

The POU-specific domain maps to 1–49 (QADVGLALGTLYGNVFSQTTICRFEALQLSFKNMCKLKPLLNKWLEEAD). The segment at residues 67–105 (KRKKRTSIEVSVKGALESHFLKCPKPAAQEITTLADSLQ) is a DNA-binding region (homeobox).

It belongs to the POU transcription factor family. Class-3 subfamily.

The protein localises to the nucleus. This chain is POU domain, class 3, transcription factor 3 (pou3f3), found in Xenopus laevis (African clawed frog).